The sequence spans 310 residues: Phosphoribosylaminoimidazole-succinocarboxamide synthase (310 aa).

Belongs to the SAICAR synthetase family.

The enzyme catalyses 5-amino-1-(5-phospho-D-ribosyl)imidazole-4-carboxylate + L-aspartate + ATP = (2S)-2-[5-amino-1-(5-phospho-beta-D-ribosyl)imidazole-4-carboxamido]succinate + ADP + phosphate + 2 H(+). The protein operates within purine metabolism; IMP biosynthesis via de novo pathway; 5-amino-1-(5-phospho-D-ribosyl)imidazole-4-carboxamide from 5-amino-1-(5-phospho-D-ribosyl)imidazole-4-carboxylate: step 1/2. The sequence is that of Phosphoribosylaminoimidazole-succinocarboxamide synthase from Xanthomonas axonopodis pv. citri (strain 306).